The following is a 77-amino-acid chain: Conotoxin ArMKLT2-0122 (77 aa).

The first 22 residues, 1-22 (MKLTCVLIVAVLFLTACQLIAA), serve as a signal peptide directing secretion. Positions 23–44 (DDSRDLKRFSRRKMRDGMLNTK) are excised as a propeptide. Intrachain disulfides connect C50–C65, C57–C68, and C64–C73.

It belongs to the conotoxin O1 superfamily. In terms of tissue distribution, expressed by the venom duct.

It is found in the secreted. The polypeptide is Conotoxin ArMKLT2-0122 (Conus arenatus (Sand-dusted cone)).